Reading from the N-terminus, the 155-residue chain is Small ribosomal subunit protein uS7 (155 aa).

Belongs to the universal ribosomal protein uS7 family. Part of the 30S ribosomal subunit. Contacts proteins S9 and S11.

One of the primary rRNA binding proteins, it binds directly to 16S rRNA where it nucleates assembly of the head domain of the 30S subunit. Is located at the subunit interface close to the decoding center, probably blocks exit of the E-site tRNA. The protein is Small ribosomal subunit protein uS7 of Fervidobacterium nodosum (strain ATCC 35602 / DSM 5306 / Rt17-B1).